The sequence spans 128 residues: Large ribosomal subunit protein bL19 (128 aa).

The protein belongs to the bacterial ribosomal protein bL19 family.

This protein is located at the 30S-50S ribosomal subunit interface and may play a role in the structure and function of the aminoacyl-tRNA binding site. The polypeptide is Large ribosomal subunit protein bL19 (Janthinobacterium sp. (strain Marseille) (Minibacterium massiliensis)).